We begin with the raw amino-acid sequence, 126 residues long: Small ribosomal subunit protein bS6 (126 aa).

Positions 103–126 (LKAKDERKAPEALVEEVEAEDADE) are disordered. Residues 115–126 (LVEEVEAEDADE) show a composition bias toward acidic residues.

It belongs to the bacterial ribosomal protein bS6 family.

Binds together with bS18 to 16S ribosomal RNA. This Glaesserella parasuis serovar 5 (strain SH0165) (Haemophilus parasuis) protein is Small ribosomal subunit protein bS6.